The following is a 903-amino-acid chain: Protein translocase subunit SecA (903 aa).

ATP is bound by residues glutamine 85, 103 to 107, and aspartate 492; that span reads GEGKT. Positions 863–890 are disordered; it reads GDGVKQPVRRDKKVGRNSPCPCGSGKKY. 4 residues coordinate Zn(2+): cysteine 882, cysteine 884, cysteine 893, and cysteine 894.

It belongs to the SecA family. As to quaternary structure, monomer and homodimer. Part of the essential Sec protein translocation apparatus which comprises SecA, SecYEG and auxiliary proteins SecDF. Other proteins may also be involved. Requires Zn(2+) as cofactor.

The protein resides in the cell membrane. The protein localises to the cytoplasm. The catalysed reaction is ATP + H2O + cellular proteinSide 1 = ADP + phosphate + cellular proteinSide 2.. In terms of biological role, part of the Sec protein translocase complex. Interacts with the SecYEG preprotein conducting channel. Has a central role in coupling the hydrolysis of ATP to the transfer of proteins into and across the cell membrane, serving as an ATP-driven molecular motor driving the stepwise translocation of polypeptide chains across the membrane. This chain is Protein translocase subunit SecA, found in Desulforudis audaxviator (strain MP104C).